Consider the following 216-residue polypeptide: Thymidylate kinase (216 aa).

G10–T17 provides a ligand contact to ATP.

This sequence belongs to the thymidylate kinase family.

The catalysed reaction is dTMP + ATP = dTDP + ADP. Phosphorylation of dTMP to form dTDP in both de novo and salvage pathways of dTTP synthesis. This Prochlorococcus marinus (strain MIT 9303) protein is Thymidylate kinase.